The sequence spans 171 residues: Vimentin-type intermediate filament-associated coiled-coil protein (171 aa).

Residues 7 to 98 (LQIREANAHL…QRDQMIQELQ (92 aa)) adopt a coiled-coil conformation. Residues 126–171 (ELGPLPSSHSHGAQLLPDGPGPPLGNSMREEEGQDDQQPAVFGTTV) form a disordered region.

Expressed in brain, heart, kidney, liver, lung, skeletal muscle, spleen and testis. Within the kidney expression is pronounced within glomeruli.

It localises to the cytoplasm. This Rattus norvegicus (Rat) protein is Vimentin-type intermediate filament-associated coiled-coil protein (Vmac).